Here is a 443-residue protein sequence, read N- to C-terminus: Deoxyguanosinetriphosphate triphosphohydrolase-like protein (443 aa).

Positions 61 to 246 (RLTHSLEVAC…MEAADDICYG (186 aa)) constitute an HD domain.

The protein belongs to the dGTPase family. Type 3 subfamily.

This Pseudomonas aeruginosa (strain LESB58) protein is Deoxyguanosinetriphosphate triphosphohydrolase-like protein.